The primary structure comprises 218 residues: Protein N-lysine methyltransferase METTL21A (218 aa).

S-adenosyl-L-methionine contacts are provided by residues Trp-47, 73-75 (GAG), Asp-94, Trp-125, and Ala-143.

The protein belongs to the methyltransferase superfamily. METTL21 family.

The protein resides in the cytoplasm. It carries out the reaction L-lysyl-[protein] + 3 S-adenosyl-L-methionine = N(6),N(6),N(6)-trimethyl-L-lysyl-[protein] + 3 S-adenosyl-L-homocysteine + 3 H(+). Protein-lysine methyltransferase that selectively trimethylates residues in heat shock protein 70 (HSP70) family members. In Danio rerio (Zebrafish), this protein is Protein N-lysine methyltransferase METTL21A (mettl21a).